The chain runs to 1197 residues: Serine/threonine-protein kinase pakA (1197 aa).

5 disordered regions span residues 1–96 (MEEK…PIYR), 328–383 (QKED…KNID), 430–468 (REEE…EQRN), 485–543 (EEEE…NLMG), and 562–819 (NSSG…RVGT). Positions 19-30 (QKFEQFLDKTDK) are enriched in basic and acidic residues. Residues 34-49 (ATRNNYRGPVSSSTGI) are compositionally biased toward polar residues. Residues 51–69 (NDKEKKSHSYFKVREEGSN) show a composition bias toward basic and acidic residues. Over residues 70 to 79 (KRPSSFSASN) the composition is skewed to polar residues. Composition is skewed to low complexity over residues 80 to 94 (PITP…SSPI) and 346 to 381 (NNNN…NNKN). Residues 439–458 (RVERELASRRRQEEDRIKRE) are compositionally biased toward basic and acidic residues. The segment covering 494-523 (SQLQSSQQQQKSSSTQRSSNTVTSTSSSST) has biased composition (low complexity). The segment covering 524-536 (GGDSNPSTSQKPT) has biased composition (polar residues). T585 is subject to Phosphothreonine; by PKB. Polar residues predominate over residues 593 to 615 (SENTPLVSSIDNNGVNNKMSRSH). Low complexity-rich tracts occupy residues 636–653 (NVNN…NNNH) and 671–707 (SSSM…SSPT). Polar residues predominate over residues 718 to 727 (TTSTGSTRKG). Over residues 728–737 (SISEREDKKK) the composition is skewed to basic and acidic residues. Low complexity predominate over residues 739 to 756 (SSSSTSSSSSSNGGLSSS). Positions 757 to 790 (GKDHKKDHSSEEKEKEKKSFFNKLFSKEKKDHHS) are enriched in basic and acidic residues. The CRIB domain maps to 817 to 830 (VGTPFNVKHDVHVN). In terms of domain architecture, Protein kinase spans 911–1164 (YYNINKIGEG…SSSLLHHPFL (254 aa)). Residues 917 to 925 (IGEGGAGEV) and K940 each bind ATP. D1032 acts as the Proton acceptor in catalysis.

Belongs to the protein kinase superfamily. STE Ser/Thr protein kinase family. STE20 subfamily. The cofactor is Mg(2+). In terms of processing, phosphorylation on Thr-585 results in cAMP-mediated activation and localization to the cytoskeleton. As to expression, colocalizes with myosin II to the cleavage furrow of cells undergoing cytokinesis and the posterior cortex of polarized cells.

The protein resides in the cytoplasm. The protein localises to the cytosol. It is found in the cytoskeleton. It catalyses the reaction L-seryl-[protein] + ATP = O-phospho-L-seryl-[protein] + ADP + H(+). It carries out the reaction L-threonyl-[protein] + ATP = O-phospho-L-threonyl-[protein] + ADP + H(+). Functionally, regulator of the myosin II component of the cytoskeleton: required for regulation of cytokinesis. Functions during chemotaxis, required for maintaining the direction of cell movement, suppressing lateral pseudopod extension, and proper retraction of the posterior of chemotaxing cells. This chain is Serine/threonine-protein kinase pakA (pakA), found in Dictyostelium discoideum (Social amoeba).